Reading from the N-terminus, the 244-residue chain is 5-oxoprolinase subunit A (244 aa).

This sequence belongs to the LamB/PxpA family. In terms of assembly, forms a complex composed of PxpA, PxpB and PxpC.

The enzyme catalyses 5-oxo-L-proline + ATP + 2 H2O = L-glutamate + ADP + phosphate + H(+). Functionally, catalyzes the cleavage of 5-oxoproline to form L-glutamate coupled to the hydrolysis of ATP to ADP and inorganic phosphate. The sequence is that of 5-oxoprolinase subunit A from Salmonella arizonae (strain ATCC BAA-731 / CDC346-86 / RSK2980).